The following is a 105-amino-acid chain: Keratin-associated protein 17-1 (105 aa).

In terms of assembly, interacts with hair keratins.

Functionally, in the hair cortex, hair keratin intermediate filaments are embedded in an interfilamentous matrix, consisting of hair keratin-associated proteins (KRTAP), which are essential for the formation of a rigid and resistant hair shaft through their extensive disulfide bond cross-linking with abundant cysteine residues of hair keratins. The matrix proteins include the high-sulfur and high-glycine-tyrosine keratins. This is Keratin-associated protein 17-1 (KRTAP17-1) from Homo sapiens (Human).